A 226-amino-acid chain; its full sequence is Protein Thf1 (226 aa).

The stretch at 183-213 forms a coiled coil; it reads EEKMQKDLDLYRSNLEKMDQLLTVIEEALQA.

This sequence belongs to the THF1 family.

In terms of biological role, may be involved in photosynthetic membrane biogenesis. This chain is Protein Thf1, found in Gloeothece citriformis (strain PCC 7424) (Cyanothece sp. (strain PCC 7424)).